A 192-amino-acid polypeptide reads, in one-letter code: Nucleoside triphosphate pyrophosphatase (192 aa).

D73 acts as the Proton acceptor in catalysis.

It belongs to the Maf family. Requires a divalent metal cation as cofactor.

The protein resides in the cytoplasm. The enzyme catalyses a ribonucleoside 5'-triphosphate + H2O = a ribonucleoside 5'-phosphate + diphosphate + H(+). The catalysed reaction is a 2'-deoxyribonucleoside 5'-triphosphate + H2O = a 2'-deoxyribonucleoside 5'-phosphate + diphosphate + H(+). Nucleoside triphosphate pyrophosphatase. May have a dual role in cell division arrest and in preventing the incorporation of modified nucleotides into cellular nucleic acids. The polypeptide is Nucleoside triphosphate pyrophosphatase (Ehrlichia canis (strain Jake)).